A 120-amino-acid polypeptide reads, in one-letter code: Large ribosomal subunit protein eL8 (120 aa).

It belongs to the eukaryotic ribosomal protein eL8 family. In terms of assembly, part of the 50S ribosomal subunit. Probably part of the RNase P complex.

The protein resides in the cytoplasm. Its function is as follows. Multifunctional RNA-binding protein that recognizes the K-turn motif in ribosomal RNA, the RNA component of RNase P, box H/ACA, box C/D and box C'/D' sRNAs. The polypeptide is Large ribosomal subunit protein eL8 (Methanosarcina mazei (strain ATCC BAA-159 / DSM 3647 / Goe1 / Go1 / JCM 11833 / OCM 88) (Methanosarcina frisia)).